The following is a 576-amino-acid chain: Formate--tetrahydrofolate ligase 2 (576 aa).

ATP is bound at residue 69 to 76; it reads TPLGEGKT.

It belongs to the formate--tetrahydrofolate ligase family.

It carries out the reaction (6S)-5,6,7,8-tetrahydrofolate + formate + ATP = (6R)-10-formyltetrahydrofolate + ADP + phosphate. Its pathway is one-carbon metabolism; tetrahydrofolate interconversion. The chain is Formate--tetrahydrofolate ligase 2 from Rubrobacter xylanophilus (strain DSM 9941 / JCM 11954 / NBRC 16129 / PRD-1).